Reading from the N-terminus, the 87-residue chain is Large ribosomal subunit protein uL23c (87 aa).

It belongs to the universal ribosomal protein uL23 family. As to quaternary structure, part of the 50S ribosomal subunit.

It localises to the plastid. Its subcellular location is the chloroplast. Its function is as follows. Binds to 23S rRNA. This is Large ribosomal subunit protein uL23c (rpl23) from Bigelowiella natans (Pedinomonas minutissima).